The following is a 655-amino-acid chain: Very long-chain specific acyl-CoA dehydrogenase, mitochondrial (655 aa).

The N-terminal 40 residues, 1–40 (MQSARMTPSVGRQLLRLGARSSRSAALQGQPRPTSAQRLY), are a transit peptide targeting the mitochondrion. The interval 1 to 70 (MQSARMTPSV…TREKPARAES (70 aa)) is disordered. A compositionally biased stretch (polar residues) spans 21-37 (SSRSAALQGQPRPTSAQ). The catalytic stretch occupies residues 41–482 (ASEATQAVLE…ALQGCMDKGK (442 aa)). The residue at position 51 (K51) is an N6-acetyllysine. A compositionally biased stretch (basic and acidic residues) spans 60 to 70 (STREKPARAES). An N6-acetyllysine; alternate mark is found at K71 and K127. 2 positions are modified to N6-succinyllysine; alternate: K71 and K127. K195 bears the N6-succinyllysine mark. Residue 214 to 223 (FCLTEPSSGS) coordinates FAD. Position 237 is an S-nitrosocysteine (C237). K239 bears the N6-acetyllysine; alternate mark. K239 carries the N6-succinyllysine; alternate modification. 249–251 (WIS) contacts FAD. K268 bears the N6-succinyllysine mark. K276 and K278 each carry N6-acetyllysine; alternate. 2 positions are modified to N6-succinyllysine; alternate: K276 and K278. K298 and K316 each carry N6-acetyllysine. K331 carries the N6-acetyllysine; alternate modification. An N6-succinyllysine; alternate modification is found at K331. Position 372 is an N6-succinyllysine (K372). 461-463 (FEG) is a substrate binding site. Residue E462 is the Proton acceptor of the active site. Residue 464–466 (TND) participates in FAD binding. The residue at position 482 (K482) is an N6-acetyllysine; alternate. The residue at position 482 (K482) is an N6-succinyllysine; alternate. Residues 483–516 (ELTGLGNALKNPLGNVGLLIGEASKQLRRRTGIG) form a membrane-anchoring region. Phosphoserine is present on residues S517 and S522. K550 bears the N6-acetyllysine mark. N6-acetyllysine; alternate is present on K556. Residue K556 is modified to N6-succinyllysine; alternate. Q562 contacts FAD. K639 bears the N6-succinyllysine mark.

This sequence belongs to the acyl-CoA dehydrogenase family. Homodimer. Homodimerizes after import into the mitochondrion. FAD is required as a cofactor. Post-translationally, S-nitrosylation at Cys-237 in liver improves catalytic efficiency. Widely expressed (at protein level).

Its subcellular location is the mitochondrion inner membrane. The catalysed reaction is a very-long-chain 2,3-saturated fatty acyl-CoA + oxidized [electron-transfer flavoprotein] + H(+) = a very-long-chain (2E)-enoyl-CoA + reduced [electron-transfer flavoprotein]. It catalyses the reaction dodecanoyl-CoA + oxidized [electron-transfer flavoprotein] + H(+) = (2E)-dodecenoyl-CoA + reduced [electron-transfer flavoprotein]. The enzyme catalyses tetradecanoyl-CoA + oxidized [electron-transfer flavoprotein] + H(+) = (2E)-tetradecenoyl-CoA + reduced [electron-transfer flavoprotein]. It carries out the reaction oxidized [electron-transfer flavoprotein] + hexadecanoyl-CoA + H(+) = (2E)-hexadecenoyl-CoA + reduced [electron-transfer flavoprotein]. The catalysed reaction is octadecanoyl-CoA + oxidized [electron-transfer flavoprotein] + H(+) = (2E)-octadecenoyl-CoA + reduced [electron-transfer flavoprotein]. It catalyses the reaction eicosanoyl-CoA + oxidized [electron-transfer flavoprotein] + H(+) = (2E)-eicosenoyl-CoA + reduced [electron-transfer flavoprotein]. The enzyme catalyses docosanoyl-CoA + oxidized [electron-transfer flavoprotein] + H(+) = (2E)-docosenoyl-CoA + reduced [electron-transfer flavoprotein]. It carries out the reaction tetracosanoyl-CoA + oxidized [electron-transfer flavoprotein] + H(+) = (2E)-tetracosenoyl-CoA + reduced [electron-transfer flavoprotein]. It functions in the pathway lipid metabolism; mitochondrial fatty acid beta-oxidation. In terms of biological role, very long-chain specific acyl-CoA dehydrogenase is one of the acyl-CoA dehydrogenases that catalyze the first step of mitochondrial fatty acid beta-oxidation, an aerobic process breaking down fatty acids into acetyl-CoA and allowing the production of energy from fats. The first step of fatty acid beta-oxidation consists in the removal of one hydrogen from C-2 and C-3 of the straight-chain fatty acyl-CoA thioester, resulting in the formation of trans-2-enoyl-CoA. Among the different mitochondrial acyl-CoA dehydrogenases, very long-chain specific acyl-CoA dehydrogenase acts specifically on acyl-CoAs with saturated 12 to 24 carbons long primary chains. The polypeptide is Very long-chain specific acyl-CoA dehydrogenase, mitochondrial (Rattus norvegicus (Rat)).